A 362-amino-acid polypeptide reads, in one-letter code: Large ribosomal subunit protein uL2m (362 aa).

A mitochondrion-targeting transit peptide spans 1–23 (MLSYNRFRGYLIPQIHALKLFRY). The interval 306 to 362 (AMNPCDHPHGGGGGKSIGNKPSQSPWGVLAKGGYKTRRGKNVNKLLVRDRPRGKEKR) is disordered. The span at 351-362 (LVRDRPRGKEKR) shows a compositional bias: basic and acidic residues.

It belongs to the universal ribosomal protein uL2 family. As to quaternary structure, component of the mitochondrial large ribosomal subunit (mt-LSU). Mature yeast 74S mitochondrial ribosomes consist of a small (37S) and a large (54S) subunit. The 37S small subunit contains a 15S ribosomal RNA (15S mt-rRNA) and at least 32 different proteins. The 54S large subunit contains a 21S rRNA (21S mt-rRNA) and at least 45 different proteins. uL2m has a Na/K ligand binding site.

Its subcellular location is the mitochondrion. In terms of biological role, component of the mitochondrial ribosome (mitoribosome), a dedicated translation machinery responsible for the synthesis of mitochondrial genome-encoded proteins, including at least some of the essential transmembrane subunits of the mitochondrial respiratory chain. The mitoribosomes are attached to the mitochondrial inner membrane and translation products are cotranslationally integrated into the membrane. This Schizosaccharomyces pombe (strain 972 / ATCC 24843) (Fission yeast) protein is Large ribosomal subunit protein uL2m (rml2).